The primary structure comprises 445 residues: Histidine--tRNA ligase (445 aa).

The protein belongs to the class-II aminoacyl-tRNA synthetase family. Homodimer.

The protein localises to the cytoplasm. The catalysed reaction is tRNA(His) + L-histidine + ATP = L-histidyl-tRNA(His) + AMP + diphosphate + H(+). This Mycoplasma mobile (strain ATCC 43663 / 163K / NCTC 11711) (Mesomycoplasma mobile) protein is Histidine--tRNA ligase.